The sequence spans 162 residues: Transcription elongation factor GreA (162 aa).

A coiled-coil region spans residues 45–74; the sequence is ENAEYEAAREKQAFIEGRIKELEDMTARAE.

This sequence belongs to the GreA/GreB family.

Necessary for efficient RNA polymerase transcription elongation past template-encoded arresting sites. The arresting sites in DNA have the property of trapping a certain fraction of elongating RNA polymerases that pass through, resulting in locked ternary complexes. Cleavage of the nascent transcript by cleavage factors such as GreA or GreB allows the resumption of elongation from the new 3'terminus. GreA releases sequences of 2 to 3 nucleotides. The sequence is that of Transcription elongation factor GreA from Rickettsia felis (strain ATCC VR-1525 / URRWXCal2) (Rickettsia azadi).